We begin with the raw amino-acid sequence, 468 residues long: Neurexin-1-beta (468 aa).

The N-terminal stretch at M1–G46 is a signal peptide. Topologically, residues A47 to T391 are extracellular. One can recognise a Laminin G-like domain in the interval Y87–V285. The Ca(2+) site is built by D137 and V154. N-linked (GlcNAc...) asparagine glycosylation is present at N184. Residues G201 to K230 are essential for interaction with CBLN1; modulates interaction affinity with NLGN1, NLGN2 and NLGN3; prevents interaction with DAG1/alpha-dystroglycan; modulates interaction with alpha-latrotoxin. Residues I236 and N238 each contribute to the Ca(2+) site. S346 is a glycosylation site (O-linked (Xyl...) (heparan sulfate) serine). The segment at P350 to S381 is disordered. A helical transmembrane segment spans residues T392–Y414. Topologically, residues K415–V468 are cytoplasmic. Positions N435–V468 are disordered. Phosphoserine is present on residues S450, S451, and S454.

It belongs to the neurexin family. In terms of assembly, the cytoplasmic C-terminal region binds to CASK. Binds NLGN1, NLGN2 and NLGN3, DAG1 (alpha-dystroglycan) and alpha-latrotoxin. Binding to neuroligins is calcium-dependent, and the binding preference ranks as follow: NLGN1 &gt; NLGN4 &gt;&gt; NLGN3 &gt; NLGN2. Interacts with CBLN2 and more weakly with CBLN4. Interacts with CBLN1; interaction is CBLN1 hexamer form-dependent; CBLN1-binding is calcium-independent; isoform 1b does not interact with CBLN1. Interacts with CLSTN3. Post-translationally, N-glycosylated. In terms of processing, O-glycosylated; contains heparan sulfate. Heparan sulfate attachment is required for synapse development by mediating interactions with neuroligins. As to expression, brain.

It is found in the presynaptic cell membrane. Functionally, neuronal cell surface protein involved in cell recognition and cell adhesion by forming intracellular junctions through binding to neuroligins. Plays a role in formation of synaptic junctions. Functions as part of a trans-synaptic complex by binding to cerebellins and postsynaptic GRID1. This interaction helps regulate the activity of NMDA and AMPA receptors at hippocampal synapses without affecting synapse formation. NRXN1B-CBLN2-GRID1 complex transduce presynaptic signals into postsynaptic NMDAR response. This Rattus norvegicus (Rat) protein is Neurexin-1-beta.